A 727-amino-acid polypeptide reads, in one-letter code: FACT complex subunit Ssrp1 (727 aa).

Disordered stretches follow at residues 458-565 (AEAR…AFML) and 596-727 (ELKD…EGSD). Acidic residues-rich tracts occupy residues 464–479 (EEED…ESTD) and 487–508 (NESD…DDSD). Residues 510–519 (SGGGGDGGTD) show a composition bias toward gly residues. 3 stretches are compositionally biased toward basic and acidic residues: residues 529 to 555 (KKNE…DTGK), 596 to 620 (ELKD…EMRN), and 675 to 703 (DQEK…KSES). Positions 556 to 622 (PKRGTSAFML…RYQEEMRNYK (67 aa)) form a DNA-binding region, HMG box. Over residues 704–727 (EGGDSDDASNASEDDDEEEDEGSD) the composition is skewed to acidic residues.

The protein belongs to the SSRP1 family. In terms of assembly, component of the FACT complex, a stable heterodimer of dre4/spt16 and Ssrp.

The protein localises to the nucleus. It localises to the chromosome. The protein resides in the nucleolus. Component of the FACT complex, a general chromatin factor that acts to reorganize nucleosomes. The FACT complex is involved in multiple processes that require DNA as a template such as mRNA elongation, DNA replication and DNA repair. During transcription elongation the FACT complex acts as a histone chaperone that both destabilizes and restores nucleosomal structure. It facilitates the passage of RNA polymerase II and transcription by promoting the dissociation of one histone H2A-H2B dimer from the nucleosome, then subsequently promotes the reestablishment of the nucleosome following the passage of RNA polymerase II. Binds specifically to single-stranded DNA and RNA with highest affinity for nucleotides G and U. The FACT complex is required for expression of Hox genes. In Drosophila pseudoobscura pseudoobscura (Fruit fly), this protein is FACT complex subunit Ssrp1 (Ssrp).